Here is a 190-residue protein sequence, read N- to C-terminus: Inosine triphosphate pyrophosphatase (190 aa).

Residue 8–13 (TGNANK) coordinates ITP. E37 lines the Mg(2+) pocket. ITP is bound by residues K49, 65-66 (DT), K82, 140-143 (FGWD), K163, and 168-169 (HR).

This sequence belongs to the HAM1 NTPase family. Homodimer. The cofactor is Mg(2+). Mn(2+) is required as a cofactor.

The protein resides in the cytoplasm. Its subcellular location is the nucleus. It carries out the reaction ITP + H2O = IMP + diphosphate + H(+). It catalyses the reaction dITP + H2O = dIMP + diphosphate + H(+). The catalysed reaction is XTP + H2O = XMP + diphosphate + H(+). In terms of biological role, pyrophosphatase that hydrolyzes non-canonical purine nucleotides such as inosine triphosphate (ITP), deoxyinosine triphosphate (dITP) or xanthosine 5'-triphosphate (XTP) to their respective monophosphate derivatives. The enzyme does not distinguish between the deoxy- and ribose forms. Probably excludes non-canonical purines from RNA and DNA precursor pools, thus preventing their incorporation into RNA and DNA and avoiding chromosomal lesions. The protein is Inosine triphosphate pyrophosphatase of Batrachochytrium dendrobatidis (strain JAM81 / FGSC 10211) (Frog chytrid fungus).